The following is a 482-amino-acid chain: Mannose-1-phosphate guanylyltransferase 2 (482 aa).

The protein belongs to the mannose-6-phosphate isomerase type 2 family.

It carries out the reaction alpha-D-mannose 1-phosphate + GTP + H(+) = GDP-alpha-D-mannose + diphosphate. The protein operates within nucleotide-sugar biosynthesis; GDP-alpha-D-mannose biosynthesis; GDP-alpha-D-mannose from alpha-D-mannose 1-phosphate (GTP route): step 1/1. In terms of biological role, involved in GDP-mannose biosynthesis which serves as the activated sugar nucleotide precursor for mannose residues in cell surface polysaccharides. This enzyme participates in synthesis of the LPS O antigen. The sequence is that of Mannose-1-phosphate guanylyltransferase 2 (manC2) from Escherichia coli O157:H7.